The primary structure comprises 382 residues: Protein phosphatase 1A (382 aa).

Gly2 carries N-myristoyl glycine lipidation. A PPM-type phosphatase domain is found at 23 to 291 (RYGLSSMQGW…DNMSVILICF (269 aa)). Mn(2+) contacts are provided by Asp60, Gly61, Asp239, and Asp282. Residues Ser375 and Ser377 each carry the phosphoserine modification.

This sequence belongs to the PP2C family. In terms of assembly, monomer. Interacts with SMAD2; the interaction dephosphorylates SMAD2 in its C-terminal SXS motif resulting in disruption of the SMAD2/SMAD4 complex, SMAD2 nuclear export and termination of the TGF-beta-mediated signaling. Interacts with SMAD2; the interaction dephosphorylates SMAD2 in its C-terminal SXS motif resulting in disruption of the SMAD2/SMAD4 complex, SMAD2 nuclear export and termination of the TGF-beta-mediated signaling. Interacts with the phosphorylated form of IKBKB/IKKB. Mg(2+) is required as a cofactor. Mn(2+) serves as cofactor. In terms of processing, N-myristoylation is essential for the recognition of its substrates for dephosphorylation.

It localises to the nucleus. The protein resides in the cytoplasm. It is found in the cytosol. The protein localises to the membrane. The enzyme catalyses O-phospho-L-seryl-[protein] + H2O = L-seryl-[protein] + phosphate. The catalysed reaction is O-phospho-L-threonyl-[protein] + H2O = L-threonyl-[protein] + phosphate. Functionally, enzyme with a broad specificity. Negatively regulates TGF-beta signaling through dephosphorylating SMAD2 and SMAD3, resulting in their dissociation from SMAD4, nuclear export of the SMADs and termination of the TGF-beta-mediated signaling. Dephosphorylates PRKAA1 and PRKAA2. Plays an important role in the termination of TNF-alpha-mediated NF-kappa-B activation through dephosphorylating and inactivating IKBKB/IKKB. This chain is Protein phosphatase 1A (Ppm1a), found in Mus musculus (Mouse).